Here is a 284-residue protein sequence, read N- to C-terminus: Shikimate dehydrogenase (NADP(+)) (284 aa).

Shikimate contacts are provided by residues 20–22 (SIS) and S67. K71 functions as the Proton acceptor in the catalytic mechanism. D83 lines the NADP(+) pocket. 2 residues coordinate shikimate: N92 and D107. Residues 129–133 (GAGGA) and I227 each bind NADP(+). Y229 serves as a coordination point for shikimate. G250 is a binding site for NADP(+).

The protein belongs to the shikimate dehydrogenase family. As to quaternary structure, homodimer.

The enzyme catalyses shikimate + NADP(+) = 3-dehydroshikimate + NADPH + H(+). It participates in metabolic intermediate biosynthesis; chorismate biosynthesis; chorismate from D-erythrose 4-phosphate and phosphoenolpyruvate: step 4/7. In terms of biological role, involved in the biosynthesis of the chorismate, which leads to the biosynthesis of aromatic amino acids. Catalyzes the reversible NADPH linked reduction of 3-dehydroshikimate (DHSA) to yield shikimate (SA). This chain is Shikimate dehydrogenase (NADP(+)), found in Streptococcus pneumoniae serotype 2 (strain D39 / NCTC 7466).